The sequence spans 171 residues: Large ribosomal subunit protein uL10 (171 aa).

This sequence belongs to the universal ribosomal protein uL10 family. Part of the ribosomal stalk of the 50S ribosomal subunit. The N-terminus interacts with L11 and the large rRNA to form the base of the stalk. The C-terminus forms an elongated spine to which L12 dimers bind in a sequential fashion forming a multimeric L10(L12)X complex.

In terms of biological role, forms part of the ribosomal stalk, playing a central role in the interaction of the ribosome with GTP-bound translation factors. The sequence is that of Large ribosomal subunit protein uL10 from Corynebacterium diphtheriae (strain ATCC 700971 / NCTC 13129 / Biotype gravis).